We begin with the raw amino-acid sequence, 406 residues long: Oligouridylate-binding protein 1 (406 aa).

2 RRM domains span residues 49–123 (RSVY…WAYA) and 134–212 (YNIF…WAAK). The tract at residues 231 to 250 (TSGTSDDGQEKVVNEDAPEN) is disordered. Positions 255-329 (TTVYVGNLAP…KPVKCSWGSK (75 aa)) constitute an RRM 3 domain.

The protein resides in the nucleus. Its function is as follows. Heterogeneous nuclear ribonucleoprotein (hnRNP)-like protein that acts as a component of the pre-mRNA processing machinery. Functions to facilitate the nuclear maturation of plant pre-mRNAs. Binds with high affinity to RNA molecules that contain AU-rich regions. May bind to the 3'-UTR and protects the mRNA against exonucleolytic degradation. Associates with nuclear poly(A)+ RNA in nucleus in vivo. Does not stimulate transcription or the 3' end cleavage/polyadenylation reaction. In Nicotiana plumbaginifolia (Leadwort-leaved tobacco), this protein is Oligouridylate-binding protein 1 (UBP1).